Reading from the N-terminus, the 438-residue chain is MPTHSLFLLSLGCSKNTVDSERLLAQAAAAAIRSVERVDEADTILINTCAFIEDAKKESIEEMLAALDKKREGVVKQVFVMGCLPELYRRELQEELPEVDAFFGTRELPQILASLGARYRSELFDERLLLTPSHYAYLKISEGCNRICSFCSIPKIRGRYQSQPLEQLLREATRLQQQGVQELNLIAQDISLFGYDTTGHSQLNELLLRLSDMDFLWIRLLYAYPVNFPLEVIDTMRDRSNICNYLDIPLQHCNDRILRAMKRGVTKADTIRLLHEMRQRNPNIRLRTTMLVGFPGETRAEFEELLDFVEEQRFDRLGCFPYNHEEHAPSAMLEDLLSIEEKEERVSELMELQEAVAESLNREFEGKEIEVVVDSFVEEMAFCRSEYDAPEVDNECLLTFGAQNIQAGNFYRALINDSSAHELYGEIVQERSAGNSPQ.

The 117-residue stretch at 4–120 (HSLFLLSLGC…ILASLGARYR (117 aa)) folds into the MTTase N-terminal domain. Residues Cys-13, Cys-49, Cys-83, Cys-144, Cys-148, and Cys-151 each coordinate [4Fe-4S] cluster. One can recognise a Radical SAM core domain in the interval 130-359 (LTPSHYAYLK…MELQEAVAES (230 aa)). Residues 362–429 (REFEGKEIEV…AHELYGEIVQ (68 aa)) form the TRAM domain.

The protein belongs to the methylthiotransferase family. RimO subfamily. It depends on [4Fe-4S] cluster as a cofactor.

The protein localises to the cytoplasm. It catalyses the reaction L-aspartate(89)-[ribosomal protein uS12]-hydrogen + (sulfur carrier)-SH + AH2 + 2 S-adenosyl-L-methionine = 3-methylsulfanyl-L-aspartate(89)-[ribosomal protein uS12]-hydrogen + (sulfur carrier)-H + 5'-deoxyadenosine + L-methionine + A + S-adenosyl-L-homocysteine + 2 H(+). Its function is as follows. Catalyzes the methylthiolation of an aspartic acid residue of ribosomal protein uS12. In Chlorobium chlorochromatii (strain CaD3), this protein is Ribosomal protein uS12 methylthiotransferase RimO.